We begin with the raw amino-acid sequence, 297 residues long: Cell division protein FtsX (297 aa).

Residues methionine 1 to threonine 21 lie on the Cytoplasmic side of the membrane. Residues isoleucine 22–valine 42 traverse the membrane as a helical segment. Residues arginine 43 to asparagine 171 lie on the Extracellular side of the membrane. Residues alanine 172–valine 192 traverse the membrane as a helical segment. Residues glutamine 193–proline 219 lie on the Cytoplasmic side of the membrane. A helical transmembrane segment spans residues phenylalanine 220–methionine 240. At valine 241–aspartate 267 the chain is on the extracellular side. The helical transmembrane segment at isoleucine 268–tyrosine 288 threads the bilayer. At leucine 289–arginine 297 the chain is on the cytoplasmic side.

Belongs to the ABC-4 integral membrane protein family. FtsX subfamily. As to quaternary structure, forms a membrane-associated complex with FtsE.

Its subcellular location is the cell membrane. Functionally, part of the ABC transporter FtsEX involved in cellular division. This chain is Cell division protein FtsX, found in Mycobacterium tuberculosis (strain ATCC 25177 / H37Ra).